The sequence spans 252 residues: Large ribosomal subunit protein uL4 (252 aa).

Belongs to the universal ribosomal protein uL4 family. As to quaternary structure, part of the 50S ribosomal subunit.

One of the primary rRNA binding proteins, this protein initially binds near the 5'-end of the 23S rRNA. It is important during the early stages of 50S assembly. It makes multiple contacts with different domains of the 23S rRNA in the assembled 50S subunit and ribosome. In terms of biological role, forms part of the polypeptide exit tunnel. This Methanococcus aeolicus (strain ATCC BAA-1280 / DSM 17508 / OCM 812 / Nankai-3) protein is Large ribosomal subunit protein uL4.